The following is a 1386-amino-acid chain: Rab3 GTPase-activating protein non-catalytic subunit (1386 aa).

The tract at residues 31-69 (GALRRDPSKTSNWEDDSWGAWEETEPQEPEEEGNTSKTQ) is disordered. Serine 38 is subject to Phosphoserine. Positions 43–63 (WEDDSWGAWEETEPQEPEEEG) are enriched in acidic residues. The residue at position 448 (serine 448) is a Phosphoserine. The residue at position 899 (threonine 899) is a Phosphothreonine. The residue at position 914 (serine 914) is a Phosphoserine. A compositionally biased stretch (basic and acidic residues) spans 959-973 (REKDVENPDEPREGI). Positions 959–982 (REKDVENPDEPREGIARSPPEVSE) are disordered. Serine 976 bears the Phosphoserine mark.

This sequence belongs to the Rab3-GAP regulatory subunit family. In terms of assembly, the Rab3 GTPase-activating complex is a heterodimer composed of Rab3gap1 and Rab3gap2. The Rab3 GTPase-activating complex interacts with DMXL2. Interacts with LMAN1.

The protein resides in the cytoplasm. It is found in the endoplasmic reticulum. Functionally, regulatory subunit of the Rab3 GTPase-activating (Rab3GAP) complex composed of RAB3GAP1 and RAB3GAP2, which has GTPase-activating protein (GAP) activity towards various Rab3 subfamily members (RAB3A, RAB3B, RAB3C and RAB3D), RAB5A and RAB43, and guanine nucleotide exchange factor (GEF) activity towards RAB18. As part of the Rab3GAP complex, acts as a GAP for Rab3 proteins by converting active RAB3-GTP to the inactive form RAB3-GDP. Rab3 proteins are involved in regulated exocytosis of neurotransmitters and hormones. The Rab3GAP complex acts as a GEF for RAB18 by promoting the conversion of inactive RAB18-GDP to the active form RAB18-GTP. Recruits and stabilizes RAB18 at the cis-Golgi membrane in fibroblasts where RAB18 is most likely activated. Also involved in RAB18 recruitment at the endoplasmic reticulum (ER) membrane where it maintains proper ER structure. Required for normal eye and brain development. May participate in neurodevelopmental processes such as proliferation, migration and differentiation before synapse formation, and non-synaptic vesicular release of neurotransmitters. This is Rab3 GTPase-activating protein non-catalytic subunit from Rattus norvegicus (Rat).